A 185-amino-acid chain; its full sequence is Peptidyl-tRNA hydrolase (185 aa).

Position 14 (Tyr-14) interacts with tRNA. The Proton acceptor role is filled by His-19. Positions 64, 66, and 112 each coordinate tRNA.

Belongs to the PTH family. As to quaternary structure, monomer.

It localises to the cytoplasm. The enzyme catalyses an N-acyl-L-alpha-aminoacyl-tRNA + H2O = an N-acyl-L-amino acid + a tRNA + H(+). In terms of biological role, hydrolyzes ribosome-free peptidyl-tRNAs (with 1 or more amino acids incorporated), which drop off the ribosome during protein synthesis, or as a result of ribosome stalling. Functionally, catalyzes the release of premature peptidyl moieties from peptidyl-tRNA molecules trapped in stalled 50S ribosomal subunits, and thus maintains levels of free tRNAs and 50S ribosomes. This is Peptidyl-tRNA hydrolase from Lactobacillus helveticus (strain DPC 4571).